The sequence spans 59 residues: Large ribosomal subunit protein bL32B (59 aa).

It belongs to the bacterial ribosomal protein bL32 family.

This chain is Large ribosomal subunit protein bL32B (rpmF2), found in Enterococcus faecalis (strain ATCC 700802 / V583).